We begin with the raw amino-acid sequence, 349 residues long: DNA repair protein XRCC3 (349 aa).

At Met-1 the chain carries N-acetylmethionine. Position 107-114 (Gly-107–Thr-114) interacts with ATP.

This sequence belongs to the RecA family. RAD51 subfamily. As to quaternary structure, interacts with RAD51C and RAD51. Part of the CX3 complex consisting of RAD51C and XRCC3; the complex has a ring-like structure arranged into a flat disc around a central channel; CX3 can interact with RAD51 in vitro. Forms a complex with FANCD2, BRCA2 and phosphorylated FANCG. Interacts with SWSAP1 and ZSWIM7; involved in homologous recombination repair. Interacts directly with PALB2 which may serve as a scaffold for a HR complex containing PALB2, BRCA2, RAD51C, RAD51 and XRCC3.

Its subcellular location is the nucleus. The protein localises to the cytoplasm. It is found in the perinuclear region. The protein resides in the mitochondrion matrix. Involved in the homologous recombination repair (HRR) pathway of double-stranded DNA, thought to repair chromosomal fragmentation, translocations and deletions. Part of the RAD21 paralog protein complex CX3 which acts in the BRCA1-BRCA2-dependent HR pathway. Upon DNA damage, CX3 acts downstream of RAD51 recruitment; the complex binds predominantly to the intersection of the four duplex arms of the Holliday junction (HJ) and to junctions of replication forks. Involved in HJ resolution and thus in processing HR intermediates late in the DNA repair process; the function may be linked to the CX3 complex and seems to involve GEN1 during mitotic cell cycle progression. Part of a PALB2-scaffolded HR complex containing BRCA2 and RAD51C and which is thought to play a role in DNA repair by HR. Plays a role in regulating mitochondrial DNA copy number under conditions of oxidative stress in the presence of RAD51 and RAD51C. This Mus musculus (Mouse) protein is DNA repair protein XRCC3 (Xrcc3).